The sequence spans 117 residues: Ribosome-binding factor A (117 aa).

The protein belongs to the RbfA family. Monomer. Binds 30S ribosomal subunits, but not 50S ribosomal subunits or 70S ribosomes.

The protein resides in the cytoplasm. Its function is as follows. One of several proteins that assist in the late maturation steps of the functional core of the 30S ribosomal subunit. Associates with free 30S ribosomal subunits (but not with 30S subunits that are part of 70S ribosomes or polysomes). Required for efficient processing of 16S rRNA. May interact with the 5'-terminal helix region of 16S rRNA. The chain is Ribosome-binding factor A from Leptospira interrogans serogroup Icterohaemorrhagiae serovar copenhageni (strain Fiocruz L1-130).